The following is a 285-amino-acid chain: 3',5'-nucleoside bisphosphate phosphatase (285 aa).

Residues H7, H9, D14, H39, E64, and H75 each contribute to the Mn(2+) site. 2 residues coordinate substrate: D14 and H39. Residues R99–R102 and R134–T135 each bind substrate. Residues H191, D248, and H250 each contribute to the Mn(2+) site. H250 contacts substrate.

Belongs to the PHP family. Monomer. Mn(2+) is required as a cofactor.

The catalysed reaction is a ribonucleoside 3',5'-bisphosphate + H2O = a ribonucleoside 5'-phosphate + phosphate. In terms of biological role, hydrolyzes 3',5'-bisphosphonucleosides (pGp, pCp, pUp, and pIp) to nucleoside 5'-phosphate and orthophosphate. Has similar catalytic efficiencies with all the bases. Also shows activity with ribonucleoside 2'-deoxyribonucleoside 3',5'-bisphosphates. Does not show activity with nucleoside 2',5'-bisphosphates. The sequence is that of 3',5'-nucleoside bisphosphate phosphatase from Chromobacterium violaceum (strain ATCC 12472 / DSM 30191 / JCM 1249 / CCUG 213 / NBRC 12614 / NCIMB 9131 / NCTC 9757 / MK).